The following is a 449-amino-acid chain: Alginate biosynthesis transcriptional regulatory protein AlgB (449 aa).

Positions 10–124 (RILLVDDESA…QLRLAAAKQL (115 aa)) constitute a Response regulatory domain. A 4-aspartylphosphate modification is found at aspartate 59. A Sigma-54 factor interaction domain is found at 147 to 376 (LESHSPAMAA…LRNVIERASI (230 aa)). ATP-binding positions include 175-182 (GESGSGKG) and 238-247 (ADGGTLFLDE). The segment at residues 426–445 (LDQAAKTLGIDASTLYRKRK) is a DNA-binding region (H-T-H motif).

Phosphorylated by KinB.

The protein operates within glycan biosynthesis; alginate biosynthesis [regulation]. Its function is as follows. Member of the two-component regulatory system AlgB/KinB involved in regulation of alginate biosynthesis genes. Positive regulator of the alginate biosynthetic gene AlgD. This chain is Alginate biosynthesis transcriptional regulatory protein AlgB (algB), found in Pseudomonas aeruginosa (strain ATCC 15692 / DSM 22644 / CIP 104116 / JCM 14847 / LMG 12228 / 1C / PRS 101 / PAO1).